The primary structure comprises 199 residues: Octanoyltransferase (199 aa).

One can recognise a BPL/LPL catalytic domain in the interval 27–199 (SNSCDELWLL…FVQYFLTQFK (173 aa)). Residues 66–73 (RGGQVTYH), 133–135 (SIG), and 146–148 (GIA) contribute to the substrate site. The active-site Acyl-thioester intermediate is Cys-164.

It belongs to the LipB family.

The protein localises to the cytoplasm. The catalysed reaction is octanoyl-[ACP] + L-lysyl-[protein] = N(6)-octanoyl-L-lysyl-[protein] + holo-[ACP] + H(+). It participates in protein modification; protein lipoylation via endogenous pathway; protein N(6)-(lipoyl)lysine from octanoyl-[acyl-carrier-protein]: step 1/2. Its function is as follows. Catalyzes the transfer of endogenously produced octanoic acid from octanoyl-acyl-carrier-protein onto the lipoyl domains of lipoate-dependent enzymes. Lipoyl-ACP can also act as a substrate although octanoyl-ACP is likely to be the physiological substrate. The chain is Octanoyltransferase from Legionella pneumophila (strain Corby).